The chain runs to 246 residues: U11/U12 small nuclear ribonucleoprotein 35 kDa protein (246 aa).

Positions 51–129 (LTLFVARLNL…HEIFVDYELE (79 aa)) constitute an RRM domain. Lysine 172 is covalently cross-linked (Glycyl lysine isopeptide (Lys-Gly) (interchain with G-Cter in SUMO2)). The segment at 187-217 (SRSRERHWDSRTRDRDHDRGREKRWQEREPT) is disordered. The span at 192–217 (RHWDSRTRDRDHDRGREKRWQEREPT) shows a compositional bias: basic and acidic residues.

In terms of assembly, component of the U11/U12 snRNPs that are part of the U12-type spliceosome. Expressed in heart, liver, skeletal muscle and pancreas.

The protein localises to the nucleus. This Homo sapiens (Human) protein is U11/U12 small nuclear ribonucleoprotein 35 kDa protein (SNRNP35).